The sequence spans 300 residues: uncharacterized protein (300 aa).

Solcar repeat units lie at residues 10-101 (ESQT…VKDF), 119-199 (GKAI…AKEY), and 212-294 (FQNF…LIPF). 6 helical membrane-spanning segments follow: residues 16–36 (IVGS…VDTI), 70–86 (ATSL…YKIV), 121–141 (AIMH…LLPL), 178–198 (TAAR…FAKE), 215–235 (FFTS…LDVI), and 275–295 (LTTG…IPFF).

The protein belongs to the mitochondrial carrier (TC 2.A.29) family.

The protein resides in the mitochondrion inner membrane. This is an uncharacterized protein from Schizosaccharomyces pombe (strain 972 / ATCC 24843) (Fission yeast).